The following is a 511-amino-acid chain: Cytochrome P450 71A6 (511 aa).

Transmembrane regions (helical) follow at residues 1-15 and 61-77; these read ILIA…LFFL and VMQL…ASSP. Residues Asn-90, Asn-96, and Asn-167 are each glycosylated (N-linked (GlcNAc...) asparagine). Cys-450 contacts heme.

It belongs to the cytochrome P450 family. The cofactor is heme.

The protein resides in the membrane. The polypeptide is Cytochrome P450 71A6 (CYP71A6) (Nepeta racemosa (Catmint)).